The sequence spans 333 residues: Receptor polysaccharide phosphotransferase WefC (333 aa).

This sequence belongs to the stealth family.

Its function is as follows. Part of the type 2Gn receptor polysaccharide (RPS) biosynthesis locus. Essential for cell surface RPS production, and for synthesis of the host-like GalNAc beta 1-3Gal (Gn) motif of the RPS. Probably encodes a 1-3Gal alpha transferase. The chain is Receptor polysaccharide phosphotransferase WefC (wefC) from Streptococcus gordonii.